We begin with the raw amino-acid sequence, 792 residues long: Ubiquitin carboxyl-terminal hydrolase 10 (792 aa).

At Ala-2 the chain carries N-acetylalanine. An interaction with p53/TP53 region spans residues 2-99 (ALHNPQYIFG…ILGCTTSKKI (98 aa)). Positions 6–21 (PQYIFGDFSPDEFNQF) are G3BP1-binding. Residue Thr-24 is modified to Phosphothreonine. The interval 126–164 (SNAEAETLENDSGAGGLGQRERKKKKKRPPGYYSYLKDG) is disordered. Phosphoserine occurs at positions 208 and 223. Over residues 300–309 (DEGADLDPAK) the composition is skewed to basic and acidic residues. The interval 300-323 (DEGADLDPAKPESQSPPAESALSA) is disordered. Ser-314 carries the phosphoserine modification. Phosphoserine; by ATM is present on Ser-330. The segment at 350 to 369 (PMAYVETKCSPPVPSPLASE) is disordered. A phosphoserine mark is found at Ser-359 and Ser-364. The region spanning 409-789 (RGLINKGNWC…TAYLLYYRRV (381 aa)) is the USP domain. The Nucleophile role is filled by Cys-418. Phosphoserine is present on Ser-541. The tract at residues 542-580 (PTHEKHSVSNGPRSDLIEDEELEDTGKGSEDEWEQVGPK) is disordered. At Thr-566 the chain carries Phosphothreonine. At Ser-570 the chain carries Phosphoserine. Catalysis depends on His-743, which acts as the Proton acceptor.

This sequence belongs to the peptidase C19 family. USP10 subfamily. As to quaternary structure, found in a deubiquitination complex with TANK, USP10 and ZC3H12A; this complex inhibits genotoxic stress- or interleukin-1-beta (IL1B)-mediated NF-kappa-B activation by promoting IKBKG or TRAF6 deubiquitination. Interacts with IKBKG; this interaction increases in response to DNA damage. Interacts with TANK; this interaction increases in response to DNA damage. Interacts with TRAF6; this interaction increases in response to DNA damage. Interacts with ZC3H12A; this interaction increases in response to DNA damage. Interacts with G3BP1 (via NTF2 domain) and G3BP2 (via NTF2 domain); inhibiting stress granule formation. Post-translationally, phosphorylated by ATM following DNA damage, leading to stabilization and translocation it to the nucleus. In terms of processing, ubiquitinated. Deubiquitinated by USP13.

It localises to the cytoplasm. Its subcellular location is the nucleus. The protein localises to the early endosome. It carries out the reaction Thiol-dependent hydrolysis of ester, thioester, amide, peptide and isopeptide bonds formed by the C-terminal Gly of ubiquitin (a 76-residue protein attached to proteins as an intracellular targeting signal).. Its activity is regulated as follows. Specifically inhibited by spautin-1 (specific and potent autophagy inhibitor-1), a derivative of MBCQ that binds to USP10 and inhibits deubiquitinase activity. Regulated by PIK3C3/VPS34-containing complexes. Hydrolase that can remove conjugated ubiquitin from target proteins such as p53/TP53, RPS2/us5, RPS3/us3, RPS10/eS10, BECN1, SNX3 and CFTR. Acts as an essential regulator of p53/TP53 stability: in unstressed cells, specifically deubiquitinates p53/TP53 in the cytoplasm, leading to counteract MDM2 action and stabilize p53/TP53. Following DNA damage, translocates to the nucleus and deubiquitinates p53/TP53, leading to regulate the p53/TP53-dependent DNA damage response. Component of a regulatory loop that controls autophagy and p53/TP53 levels: mediates deubiquitination of BECN1, a key regulator of autophagy, leading to stabilize the PIK3C3/VPS34-containing complexes. In turn, PIK3C3/VPS34-containing complexes regulate USP10 stability, suggesting the existence of a regulatory system by which PIK3C3/VPS34-containing complexes regulate p53/TP53 protein levels via USP10 and USP13. Does not deubiquitinate MDM2. Plays a key role in 40S ribosome subunit recycling when a ribosome has stalled during translation: acts both by inhibiting formation of stress granules, which store stalled translation pre-initiation complexes, and mediating deubiquitination of 40S ribosome subunits. Acts as a negative regulator of stress granules formation by lowering G3BP1 and G3BP2 valence, thereby preventing G3BP1 and G3BP2 ability to undergo liquid-liquid phase separation (LLPS) and assembly of stress granules. Promotes 40S ribosome subunit recycling following ribosome dissociation in response to ribosome stalling by mediating deubiquitination of 40S ribosomal proteins RPS2/us5, RPS3/us3 and RPS10/eS10, thereby preventing their degradation by the proteasome. Part of a ribosome quality control that takes place when ribosomes have stalled during translation initiation (iRQC): USP10 acts by removing monoubiquitination of RPS2/us5 and RPS3/us3, promoting 40S ribosomal subunit recycling. Deubiquitinates CFTR in early endosomes, enhancing its endocytic recycling. Involved in a TANK-dependent negative feedback response to attenuate NF-kappa-B activation via deubiquitinating IKBKG or TRAF6 in response to interleukin-1-beta (IL1B) stimulation or upon DNA damage. Deubiquitinates TBX21 leading to its stabilization. Plays a negative role in the RLR signaling pathway upon RNA virus infection by blocking the RIGI-mediated MAVS activation. Mechanistically, removes the unanchored 'Lys-63'-linked polyubiquitin chains of MAVS to inhibit its aggregation, essential for its activation. This is Ubiquitin carboxyl-terminal hydrolase 10 (Usp10) from Mus musculus (Mouse).